The following is a 553-amino-acid chain: Arginine--tRNA ligase (553 aa).

The short motif at 130–140 (ANPTGPIHLGG) is the 'HIGH' region element.

This sequence belongs to the class-I aminoacyl-tRNA synthetase family. In terms of assembly, monomer.

Its subcellular location is the cytoplasm. It catalyses the reaction tRNA(Arg) + L-arginine + ATP = L-arginyl-tRNA(Arg) + AMP + diphosphate. This Corynebacterium aurimucosum (strain ATCC 700975 / DSM 44827 / CIP 107346 / CN-1) (Corynebacterium nigricans) protein is Arginine--tRNA ligase.